A 368-amino-acid polypeptide reads, in one-letter code: Phosphoribosylformylglycinamidine cyclo-ligase (368 aa).

This sequence belongs to the AIR synthase family.

It is found in the cytoplasm. It catalyses the reaction 2-formamido-N(1)-(5-O-phospho-beta-D-ribosyl)acetamidine + ATP = 5-amino-1-(5-phospho-beta-D-ribosyl)imidazole + ADP + phosphate + H(+). It participates in purine metabolism; IMP biosynthesis via de novo pathway; 5-amino-1-(5-phospho-D-ribosyl)imidazole from N(2)-formyl-N(1)-(5-phospho-D-ribosyl)glycinamide: step 2/2. The protein is Phosphoribosylformylglycinamidine cyclo-ligase of Novosphingobium aromaticivorans (strain ATCC 700278 / DSM 12444 / CCUG 56034 / CIP 105152 / NBRC 16084 / F199).